Reading from the N-terminus, the 369-residue chain is Phenylalanine--tRNA ligase alpha subunit (369 aa).

E269 is a binding site for Mg(2+).

The protein belongs to the class-II aminoacyl-tRNA synthetase family. Phe-tRNA synthetase alpha subunit type 1 subfamily. In terms of assembly, tetramer of two alpha and two beta subunits. The cofactor is Mg(2+).

The protein localises to the cytoplasm. The enzyme catalyses tRNA(Phe) + L-phenylalanine + ATP = L-phenylalanyl-tRNA(Phe) + AMP + diphosphate + H(+). The protein is Phenylalanine--tRNA ligase alpha subunit of Brucella melitensis biotype 1 (strain ATCC 23456 / CCUG 17765 / NCTC 10094 / 16M).